A 1263-amino-acid polypeptide reads, in one-letter code: MWLGPEEVLVANALWVTERANPFFVLQRRRGHGKGGGLTGLLVGTLDVVLDSSARVAPYRILHQTQDSQVYWIVACGSSRKEITKHWEWLENNLLQTLSIFDNEEDITTFVKGKIHGIIAEENKNLQPQGDEDPGKFKEAELKMRKQFGMPEGEKLVNYYSCNFWKGRVPRQGWLYLTVNHLCFYSFLLGKEVSLVVQWVDVTRLEKNATLLFPESIRVDTRDQELFFSMFLNIGETFKLMEQLANLAMRQLLDSEGFLEDKALPRPIRPHKNISALKRDLDARAKNECYRATFRLPKDERLDGHTGCTLWTPFNKLHIPGQMFISNNYICFASKEEDACRLIIPLREVTIVEKADSSSVLPSPLSISTKSKMTFLFANLKDRDFLVQRISDFLQKTPSKQTGSSIGGTKASVSDPAPESLPTPQEASEPPASPSSPLSSPPSFSTQEIPTTSQGLLKVFQKNSPMEDLGAKGAKEKMKEESWNIHFFEYGRGMCMYRTAKTRELVLKGIPESLRGELWLLFSGAWNEMVTHPGYYAELVEKSLGKYSLATEEIERDLHRSMPEHPAFQNELGIAALRRVLTAYAFRNPTIGYCQAMNIVTSVLLLYGSEEEAFWLLVALCERMLPDYYNTRVVGALVDQGIFEELTRDVLPRLSEKMQELGVISSISLSWFLTLFLSVMPFESAVVIVDCFFYEGIKVILQVALAVLDANVEQLLDCNDEGEAMTVLGRYLDNVVNKQSISPPIPHLHALLTSGDDPPVEVDIFDLLRVSYEKFSNLRADDIEQMRFKQRLKVIQSLEDTAKRSVVRAIPGDIGFSIEELEDLYMVFKAKHLASQYWGGNRSAAVHRDPSLPYLEQYRIDASQFRELFASLTPWACGSHTPVLAGRMFRLLDQNKDSLINFKEFVTGMSGMYHGDLTEKLKALYKLHLPPALIPEEAESALEAAHYFTEDSSSEASPLASDLDLFLPWEAQALLQEQQEGSGNEDTPERREEKGTSPPDYRHYLRMWAKEKEAQKETIKDLPKMNQEQFIELCKTLYNMFSEDPMEQDLYHAIATVASLLLRIGEVGKKFSALTTKKPRDGAHSGDPNSATEEDEPPTPKLHQDPTQECQPPAAGDRQAKASGDMHLGKALQDSHVIVEGGSGEGQGSPSLLLSDDETKDDMSMSSYSVVSTGSLQCEDLTEDTVLVGGGACSPTATSRAGGTVDTDWCISFEQILASILTESVLVNFFEKRVDIGLKIKDQKKVERQFSTSSDHEPPGVLG.

GRAM domains are found at residues 142–209 (LKMR…EKNA) and 288–356 (ECYR…EKAD). Thr397 carries the phosphothreonine modification. Residues 397–449 (TPSKQTGSSIGGTKASVSDPAPESLPTPQEASEPPASPSSPLSSPPSFSTQEI) form a disordered region. Ser412, Ser433, Ser436, and Ser464 each carry phosphoserine. Low complexity predominate over residues 422–447 (PTPQEASEPPASPSSPLSSPPSFSTQ). Residues 509-696 (GIPESLRGEL…VIVDCFFYEG (188 aa)) enclose the Rab-GAP TBC domain. A helical transmembrane segment spans residues 669-689 (LSWFLTLFLSVMPFESAVVIV). The EF-hand domain occupies 880–915 (HTPVLAGRMFRLLDQNKDSLINFKEFVTGMSGMYHG). Disordered stretches follow at residues 977-1002 (EQQE…PDYR), 1075-1126 (TTKK…SGDM), and 1139-1159 (VEGG…DDET). Residues 987-1002 (TPERREEKGTSPPDYR) are compositionally biased toward basic and acidic residues. Ser1254 bears the Phosphoserine mark.

The protein resides in the membrane. Its function is as follows. May act as a GTPase-activating protein for Rab family protein(s). This is TBC1 domain family member 9B (Tbc1d9b) from Mus musculus (Mouse).